Here is a 296-residue protein sequence, read N- to C-terminus: Pyruvate synthase subunit PorB (296 aa).

The [4Fe-4S] cluster site is built by cysteine 17, cysteine 20, and cysteine 45. Over residues 140-150 (TPFDASTTTTP) the composition is skewed to polar residues. A disordered region spans residues 140–159 (TPFDASTTTTPAGKVSFGNP). Cysteine 210 contacts [4Fe-4S] cluster.

Heterotetramer of one alpha, one beta, one delta and one gamma chain. [4Fe-4S] cluster is required as a cofactor.

The catalysed reaction is 2 oxidized [2Fe-2S]-[ferredoxin] + pyruvate + CoA = 2 reduced [2Fe-2S]-[ferredoxin] + acetyl-CoA + CO2 + H(+). The chain is Pyruvate synthase subunit PorB (porB) from Methanosarcina barkeri (strain Fusaro / DSM 804).